We begin with the raw amino-acid sequence, 153 residues long: UPF0756 membrane protein NT01CX_1209 (153 aa).

4 helical membrane passes run 5–25 (IILL…LGIA), 45–65 (ENHF…IPII), 83–103 (IVCF…VGFL), and 113–133 (IILG…GPLI).

It belongs to the UPF0756 family.

The protein resides in the cell membrane. This is UPF0756 membrane protein NT01CX_1209 from Clostridium novyi (strain NT).